We begin with the raw amino-acid sequence, 315 residues long: Ribosomal RNA small subunit methyltransferase H (315 aa).

S-adenosyl-L-methionine contacts are provided by residues glycine 35–histidine 37, aspartate 55, phenylalanine 80, aspartate 102, and glutamine 109.

It belongs to the methyltransferase superfamily. RsmH family.

The protein localises to the cytoplasm. The enzyme catalyses cytidine(1402) in 16S rRNA + S-adenosyl-L-methionine = N(4)-methylcytidine(1402) in 16S rRNA + S-adenosyl-L-homocysteine + H(+). Functionally, specifically methylates the N4 position of cytidine in position 1402 (C1402) of 16S rRNA. The polypeptide is Ribosomal RNA small subunit methyltransferase H (Shewanella halifaxensis (strain HAW-EB4)).